The chain runs to 536 residues: Chaperonin GroEL 2 (536 aa).

ATP is bound by residues 29–32, Lys-50, Gly-416, and Asp-497; that span reads TLGP.

The protein belongs to the chaperonin (HSP60) family. As to quaternary structure, forms a cylinder of 14 subunits composed of two heptameric rings stacked back-to-back. Interacts with the co-chaperonin GroES.

It is found in the cytoplasm. It carries out the reaction ATP + H2O + a folded polypeptide = ADP + phosphate + an unfolded polypeptide.. Together with its co-chaperonin GroES, plays an essential role in assisting protein folding. The GroEL-GroES system forms a nano-cage that allows encapsulation of the non-native substrate proteins and provides a physical environment optimized to promote and accelerate protein folding. This Chlamydia caviae (strain ATCC VR-813 / DSM 19441 / 03DC25 / GPIC) (Chlamydophila caviae) protein is Chaperonin GroEL 2.